The primary structure comprises 545 residues: Monocarboxylate transporter 8 (545 aa).

A disordered region spans residues 1–98; sequence MALPSPASEE…VETRGTARGF (98 aa). Alanine 2 bears the N-acetylalanine mark. Residues 2–102 lie on the Cytoplasmic side of the membrane; that stretch reads ALPSPASEEA…GTARGFQPPE (101 aa). A run of 2 repeats spans residues 29–50 and 51–72. The tract at residues 29-72 is 2 X 22 AA approximate tandem repeats; it reads PVPEPEPEPEPEPEPEPEPVPVPPPEPQPEPEPQPLPDPAPLPV. Acidic residues predominate over residues 33–45; sequence PEPEPEPEPEPEP. The segment covering 46-70 has biased composition (pro residues); that stretch reads EPVPVPPPEPQPEPEPQPLPDPAPL. Residues 103 to 123 traverse the membrane as a helical segment; it reads GGFGWIVVFAATWCNGSIFGI. The Extracellular segment spans residues 124-149; the sequence is HNSVGILYSMLLEEEKEKNRQVEFQA. A helical membrane pass occupies residues 150–170; it reads AWVGALAMGMIFFCSPIVSIF. The Cytoplasmic portion of the chain corresponds to 171–181; that stretch reads TDRLGCRITAT. A helical membrane pass occupies residues 182 to 202; it reads TGAAVAFIGLHTSSFTSSLSL. At 203 to 204 the chain is on the extracellular side; that stretch reads RY. Residues 205–225 form a helical membrane-spanning segment; the sequence is FTYGILFGCGCSFAFQPSLVI. The Cytoplasmic segment spans residues 226–235; that stretch reads LGHYFQRRLG. A helical membrane pass occupies residues 236–256; the sequence is LANGVVSAGSSIFSMSFPFLI. Residues 257-264 lie on the Extracellular side of the membrane; that stretch reads KMLGDRIK. Residues 265 to 285 form a helical membrane-spanning segment; sequence LAQTFQVLSTFMFVLTLLSLT. The Cytoplasmic portion of the chain corresponds to 286 to 328; sequence YRPLLPSSQDTPSKRGAHTLRQRFLVQFRKYFNMRVFRQRTYR. Residues 329–349 form a helical membrane-spanning segment; sequence IWAFGIAAAALGYFVPYVHLM. The Extracellular segment spans residues 350–362; the sequence is KYVEDKFKEIKET. The chain crosses the membrane as a helical span at residues 363–383; that stretch reads WVLLVCIGATSGLGRLVSGHI. The Cytoplasmic segment spans residues 384–392; it reads SDSIPGLKK. A helical transmembrane segment spans residues 393–413; it reads IYLQVLSFLLLGLMSMMIPLC. Over 414 to 415 the chain is Extracellular; that stretch reads RD. The helical transmembrane segment at 416-436 threads the bilayer; sequence FGGLIVVCLFLGLCDGFFITI. Topologically, residues 437-453 are cytoplasmic; sequence MAPIAFELVGPMQASQA. Residues 454–474 traverse the membrane as a helical segment; the sequence is IGYLLGMMALPMIAGPPIAGL. Residues 475–483 are Extracellular-facing; that stretch reads LRNCFGNYH. The helical transmembrane segment at 484–504 threads the bilayer; the sequence is VAFYFAGVPPIIGAVILFFVP. Topologically, residues 505–545 are cytoplasmic; the sequence is LMHQRMFKKEQRESSKDKMLSHDPDPNGELLPGSPTPEEPI. Basic and acidic residues predominate over residues 514–529; the sequence is EQRESSKDKMLSHDPD. The segment at 514–545 is disordered; the sequence is EQRESSKDKMLSHDPDPNGELLPGSPTPEEPI. Residue threonine 540 is modified to Phosphothreonine.

It belongs to the major facilitator superfamily. Monocarboxylate porter (TC 2.A.1.13) family. Monomer. Homodimer. Homooligomer. As to expression, expressed at highest levels in liver, lower levels in brain, kidney and heart (at protein level). Expressed in microvessels of the blood-brain barrier (BBB) (at protein level).

It localises to the cell membrane. It is found in the apical cell membrane. It catalyses the reaction 3,3',5-triiodo-L-thyronine(out) = 3,3',5-triiodo-L-thyronine(in). It carries out the reaction 3,3',5'-triiodo-L-thyronine(out) = 3,3',5'-triiodo-L-thyronine(in). The catalysed reaction is L-thyroxine(out) = L-thyroxine(in). The enzyme catalyses 3,3'-diiodo-L-thyronine(out) = 3,3'-diiodo-L-thyronine(in). Its function is as follows. Specific thyroid hormone transmembrane transporter, that mediates both uptake and efflux of thyroid hormone across the cell membrane independently of pH or a Na(+) gradient. Major substrates are the iodothyronines T3 and T4 and to a lesser extent rT3 and 3,3-diiodothyronine (3,3'-T2). Acts as an important mediator of thyroid hormone transport, especially T3, through the blood-brain barrier. This Rattus norvegicus (Rat) protein is Monocarboxylate transporter 8 (SLC16A2).